A 78-amino-acid chain; its full sequence is ATP synthase subunit c (78 aa).

Transmembrane regions (helical) follow at residues 11–31 and 53–73; these read FIGAGLAAIGSGAAAIGVGHV and LFIGIAFAEALGIFAFLVALL.

The protein belongs to the ATPase C chain family. In terms of assembly, F-type ATPases have 2 components, F(1) - the catalytic core - and F(0) - the membrane proton channel. F(1) has five subunits: alpha(3), beta(3), gamma(1), delta(1), epsilon(1). F(0) has four main subunits: a(1), b(1), b'(1) and c(10-14). The alpha and beta chains form an alternating ring which encloses part of the gamma chain. F(1) is attached to F(0) by a central stalk formed by the gamma and epsilon chains, while a peripheral stalk is formed by the delta, b and b' chains.

It is found in the cell inner membrane. F(1)F(0) ATP synthase produces ATP from ADP in the presence of a proton or sodium gradient. F-type ATPases consist of two structural domains, F(1) containing the extramembraneous catalytic core and F(0) containing the membrane proton channel, linked together by a central stalk and a peripheral stalk. During catalysis, ATP synthesis in the catalytic domain of F(1) is coupled via a rotary mechanism of the central stalk subunits to proton translocation. Its function is as follows. Key component of the F(0) channel; it plays a direct role in translocation across the membrane. A homomeric c-ring of between 10-14 subunits forms the central stalk rotor element with the F(1) delta and epsilon subunits. The protein is ATP synthase subunit c of Jannaschia sp. (strain CCS1).